A 338-amino-acid polypeptide reads, in one-letter code: tRNA N6-adenosine threonylcarbamoyltransferase (338 aa).

Fe cation contacts are provided by His111 and His115. Residues 134-138 (LVSGG), Asp167, Gly180, and Asn272 contribute to the substrate site. Asp300 contributes to the Fe cation binding site.

This sequence belongs to the KAE1 / TsaD family. Fe(2+) serves as cofactor.

Its subcellular location is the cytoplasm. It carries out the reaction L-threonylcarbamoyladenylate + adenosine(37) in tRNA = N(6)-L-threonylcarbamoyladenosine(37) in tRNA + AMP + H(+). In terms of biological role, required for the formation of a threonylcarbamoyl group on adenosine at position 37 (t(6)A37) in tRNAs that read codons beginning with adenine. Is involved in the transfer of the threonylcarbamoyl moiety of threonylcarbamoyl-AMP (TC-AMP) to the N6 group of A37, together with TsaE and TsaB. TsaD likely plays a direct catalytic role in this reaction. This chain is tRNA N6-adenosine threonylcarbamoyltransferase, found in Shewanella putrefaciens (strain CN-32 / ATCC BAA-453).